We begin with the raw amino-acid sequence, 820 residues long: Leucine--tRNA ligase (820 aa).

The 'HIGH' region motif lies at 40–51 (PYPSGAGLHVGH). The 'KMSKS' region motif lies at 601–605 (KMSKS). Lysine 604 is an ATP binding site.

Belongs to the class-I aminoacyl-tRNA synthetase family.

Its subcellular location is the cytoplasm. It catalyses the reaction tRNA(Leu) + L-leucine + ATP = L-leucyl-tRNA(Leu) + AMP + diphosphate. In Chlamydia felis (strain Fe/C-56) (Chlamydophila felis), this protein is Leucine--tRNA ligase.